A 297-amino-acid polypeptide reads, in one-letter code: Ribosomal RNA small subunit methyltransferase H (297 aa).

S-adenosyl-L-methionine-binding positions include 30-32, D48, F75, D96, and Q103; that span reads GGY.

This sequence belongs to the methyltransferase superfamily. RsmH family.

Its subcellular location is the cytoplasm. The catalysed reaction is cytidine(1402) in 16S rRNA + S-adenosyl-L-methionine = N(4)-methylcytidine(1402) in 16S rRNA + S-adenosyl-L-homocysteine + H(+). In terms of biological role, specifically methylates the N4 position of cytidine in position 1402 (C1402) of 16S rRNA. This is Ribosomal RNA small subunit methyltransferase H from Ehrlichia canis (strain Jake).